The chain runs to 289 residues: Mitochondrial fission regulator 1-like (289 aa).

T27 bears the Phosphothreonine mark. Residues S38, S100, S107, S221, S222, S235, S258, and S270 each carry the phosphoserine modification.

This sequence belongs to the MTFR1 family. In terms of processing, phosphorylated by AMPK. Upon stress, phosphorylation by AMPK is sufficient to induce mitochondrial fragmentation.

The protein localises to the mitochondrion outer membrane. Functionally, mitochondrial protein required for adaptation of miochondrial dynamics to metabolic changes. Regulates mitochondrial morphology at steady state and mediates AMPK-dependent stress-induced mitochondrial fragmentation via the control of OPA1 levels. This is Mitochondrial fission regulator 1-like (MTFR1L) from Bos taurus (Bovine).